A 510-amino-acid polypeptide reads, in one-letter code: Nectin-4 (510 aa).

Positions 1-31 are cleaved as a signal peptide; it reads MPLSLGAEMWGPEAWLLLLLLLASFTGRCPA. In terms of domain architecture, Ig-like V-type spans 32-144; the sequence is GELETSDVVT…GSFQARLRLR (113 aa). Residues 32–349 are Extracellular-facing; that stretch reads GELETSDVVT…GKQVDLVSAS (318 aa). 3 disulfide bridges follow: cysteine 52–cysteine 127, cysteine 171–cysteine 223, and cysteine 270–cysteine 315. Ig-like C2-type domains follow at residues 148-237 and 248-331; these read PPLP…QRIT and ASVR…VTVD. A glycan (N-linked (GlcNAc...) asparagine) is linked at asparagine 281. Residues 350–370 form a helical membrane-spanning segment; the sequence is VVVVGVIAALLFCLLVVVVVL. Topologically, residues 371–510 are cytoplasmic; the sequence is MSRYHRRKAQ…IYINGRGHLV (140 aa). Residues 399–412 are compositionally biased toward basic and acidic residues; that stretch reads RRLHSHHTDPRSQP. Disordered regions lie at residues 399 to 447 and 457 to 476; these read RRLH…SYST and QTEL…DQDE.

This sequence belongs to the nectin family. In terms of assembly, self-associates. Interacts via its Ig-like V-type domain with NECTIN1 Ig-like V-type domain. Interacts via its C-terminus with AFDN. (Microbial infection) Interacts (via N-terminus) with measles virus hemagglutinin protein. In terms of processing, the soluble form is produced by proteolytic cleavage at the cell surface (shedding), probably by ADAM17/TACE. As to expression, predominantly expressed in placenta. Not detected in normal breast epithelium but expressed in breast carcinoma.

Its subcellular location is the cell membrane. The protein resides in the cell junction. It is found in the adherens junction. The protein localises to the secreted. Its function is as follows. Seems to be involved in cell adhesion through trans-homophilic and -heterophilic interactions, the latter including specifically interactions with NECTIN1. Does not act as receptor for alpha-herpesvirus entry into cells. (Microbial infection) Acts as a receptor for measles virus. This is Nectin-4 from Homo sapiens (Human).